A 461-amino-acid chain; its full sequence is Bifunctional protein GlmU (461 aa).

The pyrophosphorylase stretch occupies residues 1-229; it reads MNKYVVILAA…FSESLGVNDR (229 aa). UDP-N-acetyl-alpha-D-glucosamine contacts are provided by residues 8–11, Lys22, Gln72, and 77–78; these read LAAG and GT. Asp102 contributes to the Mg(2+) binding site. The UDP-N-acetyl-alpha-D-glucosamine site is built by Gly139, Glu154, Asn169, and Asn227. Asn227 is a Mg(2+) binding site. Residues 230 to 250 are linker; the sequence is IALAQATKIMQRRINEEHMKN. An N-acetyltransferase region spans residues 251 to 461; that stretch reads GVSFIDPDTA…LPLSKDKEWE (211 aa). Residues Arg332 and Lys350 each contribute to the UDP-N-acetyl-alpha-D-glucosamine site. His362 serves as the catalytic Proton acceptor. Residues Tyr365 and Asn376 each coordinate UDP-N-acetyl-alpha-D-glucosamine. Acetyl-CoA-binding positions include 385–386, Ala422, and Arg439; that span reads NY.

In the N-terminal section; belongs to the N-acetylglucosamine-1-phosphate uridyltransferase family. It in the C-terminal section; belongs to the transferase hexapeptide repeat family. In terms of assembly, homotrimer. Requires Mg(2+) as cofactor.

Its subcellular location is the cytoplasm. It carries out the reaction alpha-D-glucosamine 1-phosphate + acetyl-CoA = N-acetyl-alpha-D-glucosamine 1-phosphate + CoA + H(+). It catalyses the reaction N-acetyl-alpha-D-glucosamine 1-phosphate + UTP + H(+) = UDP-N-acetyl-alpha-D-glucosamine + diphosphate. The protein operates within nucleotide-sugar biosynthesis; UDP-N-acetyl-alpha-D-glucosamine biosynthesis; N-acetyl-alpha-D-glucosamine 1-phosphate from alpha-D-glucosamine 6-phosphate (route II): step 2/2. Its pathway is nucleotide-sugar biosynthesis; UDP-N-acetyl-alpha-D-glucosamine biosynthesis; UDP-N-acetyl-alpha-D-glucosamine from N-acetyl-alpha-D-glucosamine 1-phosphate: step 1/1. It participates in bacterial outer membrane biogenesis; LPS lipid A biosynthesis. Its function is as follows. Catalyzes the last two sequential reactions in the de novo biosynthetic pathway for UDP-N-acetylglucosamine (UDP-GlcNAc). The C-terminal domain catalyzes the transfer of acetyl group from acetyl coenzyme A to glucosamine-1-phosphate (GlcN-1-P) to produce N-acetylglucosamine-1-phosphate (GlcNAc-1-P), which is converted into UDP-GlcNAc by the transfer of uridine 5-monophosphate (from uridine 5-triphosphate), a reaction catalyzed by the N-terminal domain. The chain is Bifunctional protein GlmU from Lactobacillus gasseri (strain ATCC 33323 / DSM 20243 / BCRC 14619 / CIP 102991 / JCM 1131 / KCTC 3163 / NCIMB 11718 / NCTC 13722 / AM63).